Reading from the N-terminus, the 728-residue chain is Catalase-peroxidase (728 aa).

Residues 91–218 constitute a cross-link (tryptophyl-tyrosyl-methioninium (Trp-Tyr) (with M-244)); it reads WHSAGTYRTA…LAAVQMGLIY (128 aa). The Proton acceptor role is filled by H92. A cross-link (tryptophyl-tyrosyl-methioninium (Tyr-Met) (with W-91)) is located at residues 218–244; the sequence is YVNPEGPDGNPDPVAAARDIRDTFARM. H259 is a binding site for heme b.

This sequence belongs to the peroxidase family. Peroxidase/catalase subfamily. Homodimer or homotetramer. It depends on heme b as a cofactor. Formation of the three residue Trp-Tyr-Met cross-link is important for the catalase, but not the peroxidase activity of the enzyme.

The enzyme catalyses H2O2 + AH2 = A + 2 H2O. The catalysed reaction is 2 H2O2 = O2 + 2 H2O. Functionally, bifunctional enzyme with both catalase and broad-spectrum peroxidase activity. The sequence is that of Catalase-peroxidase from Burkholderia mallei (strain NCTC 10247).